Reading from the N-terminus, the 452-residue chain is Trigger factor (452 aa).

The 87-residue stretch at 170 to 256 (NSIVKVDFVE…IKSIKKRDLP (87 aa)) folds into the PPIase FKBP-type domain.

This sequence belongs to the FKBP-type PPIase family. Tig subfamily.

Its subcellular location is the cytoplasm. The enzyme catalyses [protein]-peptidylproline (omega=180) = [protein]-peptidylproline (omega=0). Involved in protein export. Acts as a chaperone by maintaining the newly synthesized protein in an open conformation. Functions as a peptidyl-prolyl cis-trans isomerase. The polypeptide is Trigger factor (Borrelia garinii subsp. bavariensis (strain ATCC BAA-2496 / DSM 23469 / PBi) (Borreliella bavariensis)).